The chain runs to 449 residues: Hyaluronidase (449 aa).

The N-terminal stretch at 1 to 23 is a signal peptide; that stretch reads MYHLWIKCLAAWIFLKRFNGVHV. Cystine bridges form between cysteine 47/cysteine 340 and cysteine 211/cysteine 227. N-linked (GlcNAc...) asparagine glycosylation is found at asparagine 67, asparagine 103, and asparagine 111. Glutamate 135 acts as the Proton donor in catalysis. The N-linked (GlcNAc...) asparagine glycan is linked to asparagine 153. Asparagine 357 carries N-linked (GlcNAc...) asparagine glycosylation. Disulfide bonds link cysteine 365–cysteine 376, cysteine 370–cysteine 427, and cysteine 429–cysteine 438. Asparagine 401 is a glycosylation site (N-linked (GlcNAc...) asparagine). The EGF-like domain maps to 427 to 438; it reads CQCYQGWKGLYC.

The protein belongs to the glycosyl hydrolase 56 family. Monomer. In terms of tissue distribution, expressed by the venom gland.

It localises to the secreted. The catalysed reaction is Random hydrolysis of (1-&gt;4)-linkages between N-acetyl-beta-D-glucosamine and D-glucuronate residues in hyaluronate.. Its function is as follows. Snake venom endo-hyaluronidase that degrades hyaluronan to smaller oligosaccharide fragments. In venom, it is not toxic by itself, but increases the diffusion of other venom proteins by degrading the extracellular matrix. In addition, it displays antiedematogenic activity. The chain is Hyaluronidase from Crotalus adamanteus (Eastern diamondback rattlesnake).